The sequence spans 433 residues: PC-esterase domain-containing protein 1B (433 aa).

The segment at 386-433 (PPCHQRQAPVVHRGFPRHFARGPYSNPWRDRPRRPPKHSPAGLESRPQ) is disordered.

It belongs to the PC-esterase family.

The protein is PC-esterase domain-containing protein 1B (Pced1b) of Mus musculus (Mouse).